Consider the following 288-residue polypeptide: Bifunctional protein FolD (288 aa).

NADP(+) contacts are provided by residues 168–170, T195, and V236; that span reads GRG.

It belongs to the tetrahydrofolate dehydrogenase/cyclohydrolase family. In terms of assembly, homodimer.

It catalyses the reaction (6R)-5,10-methylene-5,6,7,8-tetrahydrofolate + NADP(+) = (6R)-5,10-methenyltetrahydrofolate + NADPH. The catalysed reaction is (6R)-5,10-methenyltetrahydrofolate + H2O = (6R)-10-formyltetrahydrofolate + H(+). The protein operates within one-carbon metabolism; tetrahydrofolate interconversion. Functionally, catalyzes the oxidation of 5,10-methylenetetrahydrofolate to 5,10-methenyltetrahydrofolate and then the hydrolysis of 5,10-methenyltetrahydrofolate to 10-formyltetrahydrofolate. The sequence is that of Bifunctional protein FolD from Mycobacterium sp. (strain JLS).